Consider the following 20-residue polypeptide: Luminal-binding protein (20 aa).

This sequence belongs to the heat shock protein 70 family.

The protein resides in the endoplasmic reticulum lumen. Probably plays a role in facilitating the assembly of multimeric protein complexes inside the ER. This is Luminal-binding protein from Phaseolus vulgaris (Kidney bean).